The sequence spans 159 residues: Transmembrane protein 42 (159 aa).

A run of 4 helical transmembrane segments spans residues 37-57 (FWGVFNCLCAGAFGALAAASA), 59-79 (LAFGSEVSMGLCVLGIIVMAS), 100-120 (IASVTVTFSNILSSAFLGYVL), and 124-144 (CQEVLWWGGVFLILCGLTLIH).

The protein resides in the membrane. In Homo sapiens (Human), this protein is Transmembrane protein 42 (TMEM42).